The following is a 474-amino-acid chain: 3-isopropylmalate dehydratase large subunit (474 aa).

The [4Fe-4S] cluster site is built by Cys353, Cys414, and Cys417.

It belongs to the aconitase/IPM isomerase family. LeuC type 1 subfamily. In terms of assembly, heterodimer of LeuC and LeuD. The cofactor is [4Fe-4S] cluster.

The catalysed reaction is (2R,3S)-3-isopropylmalate = (2S)-2-isopropylmalate. Its pathway is amino-acid biosynthesis; L-leucine biosynthesis; L-leucine from 3-methyl-2-oxobutanoate: step 2/4. In terms of biological role, catalyzes the isomerization between 2-isopropylmalate and 3-isopropylmalate, via the formation of 2-isopropylmaleate. The protein is 3-isopropylmalate dehydratase large subunit of Xylella fastidiosa (strain 9a5c).